The primary structure comprises 517 residues: tRNA-2-methylthio-N(6)-dimethylallyladenosine synthase (517 aa).

The region spanning Arg29–His146 is the MTTase N-terminal domain. 6 residues coordinate [4Fe-4S] cluster: Cys38, Cys75, Cys109, Cys183, Cys187, and Cys190. The region spanning Arg169–Gln405 is the Radical SAM core domain. Positions Gln408–Val475 constitute a TRAM domain.

The protein belongs to the methylthiotransferase family. MiaB subfamily. In terms of assembly, monomer. [4Fe-4S] cluster is required as a cofactor.

The protein localises to the cytoplasm. It carries out the reaction N(6)-dimethylallyladenosine(37) in tRNA + (sulfur carrier)-SH + AH2 + 2 S-adenosyl-L-methionine = 2-methylsulfanyl-N(6)-dimethylallyladenosine(37) in tRNA + (sulfur carrier)-H + 5'-deoxyadenosine + L-methionine + A + S-adenosyl-L-homocysteine + 2 H(+). Functionally, catalyzes the methylthiolation of N6-(dimethylallyl)adenosine (i(6)A), leading to the formation of 2-methylthio-N6-(dimethylallyl)adenosine (ms(2)i(6)A) at position 37 in tRNAs that read codons beginning with uridine. The chain is tRNA-2-methylthio-N(6)-dimethylallyladenosine synthase from Mycolicibacterium paratuberculosis (strain ATCC BAA-968 / K-10) (Mycobacterium paratuberculosis).